An 861-amino-acid polypeptide reads, in one-letter code: Leucine--tRNA ligase (861 aa).

A 'HIGH' region motif is present at residues 42–52 (PYPSGKLHMGH). The 'KMSKS' region signature appears at 619-623 (KMSKS). Lys-622 is a binding site for ATP.

The protein belongs to the class-I aminoacyl-tRNA synthetase family.

Its subcellular location is the cytoplasm. It carries out the reaction tRNA(Leu) + L-leucine + ATP = L-leucyl-tRNA(Leu) + AMP + diphosphate. The protein is Leucine--tRNA ligase of Actinobacillus pleuropneumoniae serotype 5b (strain L20).